The sequence spans 185 residues: Elongation factor P (185 aa).

Belongs to the elongation factor P family.

The protein resides in the cytoplasm. Its pathway is protein biosynthesis; polypeptide chain elongation. Functionally, involved in peptide bond synthesis. Stimulates efficient translation and peptide-bond synthesis on native or reconstituted 70S ribosomes in vitro. Probably functions indirectly by altering the affinity of the ribosome for aminoacyl-tRNA, thus increasing their reactivity as acceptors for peptidyl transferase. In Lysinibacillus sphaericus (strain C3-41), this protein is Elongation factor P.